A 119-amino-acid chain; its full sequence is Small ribosomal subunit protein uS10 (119 aa).

Ala-2 is subject to N-acetylalanine. A Glycyl lysine isopeptide (Lys-Gly) (interchain with G-Cter in ubiquitin) cross-link involves residue Lys-4. Lys-8 is modified (N6-succinyllysine; alternate). Residue Lys-8 forms a Glycyl lysine isopeptide (Lys-Gly) (interchain with G-Cter in ubiquitin); alternate linkage. Thr-9 carries the post-translational modification Phosphothreonine. Residues Lys-34 and Lys-75 each carry the N6-acetyllysine modification. Ser-93 carries the phosphoserine modification.

This sequence belongs to the universal ribosomal protein uS10 family. Component of the 40S small ribosomal subunit. In terms of processing, polyubiquitinated by ZNF598 via 'Lys-63'-linked ubiquitin chains when a ribosome has stalled, initiating the ribosome quality control (RQC) pathway to degrade the potentially detrimental aberrant nascent polypeptide. Deubiquitinated by OTUD3 and USP21, antagonizing ZNF598 activity. Post-translationally, ufmylated by UFL1.

It is found in the cytoplasm. Component of the small ribosomal subunit. The ribosome is a large ribonucleoprotein complex responsible for the synthesis of proteins in the cell. This chain is Small ribosomal subunit protein uS10 (RPS20), found in Sus scrofa (Pig).